Consider the following 252-residue polypeptide: Triosephosphate isomerase (252 aa).

Substrate is bound at residue 10–12; that stretch reads NWK. His-96 (electrophile) is an active-site residue. Residue Glu-168 is the Proton acceptor of the active site. Residues Gly-174, Ser-214, and 235-236 contribute to the substrate site; that span reads GG.

Belongs to the triosephosphate isomerase family. As to quaternary structure, homodimer.

It is found in the cytoplasm. The enzyme catalyses D-glyceraldehyde 3-phosphate = dihydroxyacetone phosphate. The protein operates within carbohydrate biosynthesis; gluconeogenesis. Its pathway is carbohydrate degradation; glycolysis; D-glyceraldehyde 3-phosphate from glycerone phosphate: step 1/1. Functionally, involved in the gluconeogenesis. Catalyzes stereospecifically the conversion of dihydroxyacetone phosphate (DHAP) to D-glyceraldehyde-3-phosphate (G3P). The protein is Triosephosphate isomerase of Streptococcus agalactiae serotype Ia (strain ATCC 27591 / A909 / CDC SS700).